Here is a 529-residue protein sequence, read N- to C-terminus: Na(+)/H(+) antiporter NhaB (529 aa).

12 helical membrane-spanning segments follow: residues 13–33, 34–54, 90–110, 113–133, 136–156, 205–225, 241–261, 306–326, 327–347, 351–371, 451–471, and 479–499; these read FLGK…IINP, IVFF…EFIF, LVAN…IYFM, LLLF…ILSL, CFAA…AVVI, LLMH…VGEP, FLIR…LTCF, GLIA…VGLI, GLSV…HSLG, EEAL…AVII, ATPN…APLI, and VIMA…GIVF.

The protein belongs to the NhaB Na(+)/H(+) (TC 2.A.34) antiporter family.

The protein resides in the cell inner membrane. The catalysed reaction is 2 Na(+)(in) + 3 H(+)(out) = 2 Na(+)(out) + 3 H(+)(in). Its function is as follows. Na(+)/H(+) antiporter that extrudes sodium in exchange for external protons. The polypeptide is Na(+)/H(+) antiporter NhaB (Vibrio vulnificus (strain CMCP6)).